The sequence spans 510 residues: Lysine-specific demethylase 4D (510 aa).

Residues 15 to 57 (IMIFRPTKEEFNDFDKYIAYMESQGAHRAGLAKVIPPKEWRAR) enclose the JmjN domain. Glu-23 and Glu-24 each carry polyADP-ribosyl glutamic acid. A 2-oxoglutarate-binding site is contributed by Tyr-133. Positions 143–309 (DGKTQQWNVG…YGKVASQCSC (167 aa)) constitute a JmjC domain. Positions 189 and 191 each coordinate Fe cation. The 2-oxoglutarate site is built by Asn-199 and Lys-207. Cys-235 and His-241 together coordinate Zn(2+). Residue Lys-242 coordinates 2-oxoglutarate. Fe cation is bound at residue His-277. Residues Cys-307 and Cys-309 each coordinate Zn(2+). The interval 397 to 510 (MCHTSRQAAD…ASEGGLTSDP (114 aa)) is disordered. The segment covering 461-471 (RLPEGRDDRSP) has biased composition (basic and acidic residues).

Belongs to the JHDM3 histone demethylase family. The cofactor is Fe(2+). In terms of processing, ubiquitinated via 'Lys-63'-linked ubiquitin chains. Deubiquitinated by USP14 with the help of TRIM14 leading to stabilization.

Its subcellular location is the nucleus. It carries out the reaction N(6),N(6),N(6)-trimethyl-L-lysyl(9)-[histone H3] + 2 2-oxoglutarate + 2 O2 = N(6)-methyl-L-lysyl(9)-[histone H3] + 2 formaldehyde + 2 succinate + 2 CO2. In terms of biological role, histone demethylase that specifically demethylates 'Lys-9' of histone H3, thereby playing a central role in histone code. Does not demethylate histone H3 'Lys-4', H3 'Lys-27', H3 'Lys-36' nor H4 'Lys-20'. Demethylates both di- and trimethylated H3 'Lys-9' residue, while it has no activity on monomethylated residues. Demethylation of Lys residue generates formaldehyde and succinate. In Rattus norvegicus (Rat), this protein is Lysine-specific demethylase 4D (Kdm4d).